Reading from the N-terminus, the 769-residue chain is Major inner protein P1 (769 aa).

Homodimer. Associates with the polymerase complex.

Its subcellular location is the virion. P1 is the major inner capsid (core) protein of the polyhedral procapsid, which is responsible for genomic replication and transcription. Forms a dodecahedral shell from 60 asymmetric dimers. Binds to RNA and may be involved in genomic packaging. In Pseudomonas phage phi6 (Bacteriophage phi-6), this protein is Major inner protein P1 (P1).